The following is a 363-amino-acid chain: 4-hydroxy-2-oxovalerate aldolase 1 (363 aa).

In terms of domain architecture, Pyruvate carboxyltransferase spans 13-265 (VRMTDTSLRD…KTGIDFFDIA (253 aa)). 21–22 (RD) is a binding site for substrate. D22 lines the Mn(2+) pocket. Residue H25 is the Proton acceptor of the active site. Residues S175 and H204 each contribute to the substrate site. 2 residues coordinate Mn(2+): H204 and H206. Y295 contributes to the substrate binding site.

This sequence belongs to the 4-hydroxy-2-oxovalerate aldolase family.

The catalysed reaction is (S)-4-hydroxy-2-oxopentanoate = acetaldehyde + pyruvate. The sequence is that of 4-hydroxy-2-oxovalerate aldolase 1 from Mycobacterium sp. (strain JLS).